Here is a 185-residue protein sequence, read N- to C-terminus: Ribosome-recycling factor (185 aa).

Belongs to the RRF family.

The protein localises to the cytoplasm. In terms of biological role, responsible for the release of ribosomes from messenger RNA at the termination of protein biosynthesis. May increase the efficiency of translation by recycling ribosomes from one round of translation to another. The protein is Ribosome-recycling factor of Aromatoleum aromaticum (strain DSM 19018 / LMG 30748 / EbN1) (Azoarcus sp. (strain EbN1)).